We begin with the raw amino-acid sequence, 446 residues long: Coiled-coil domain-containing protein 112 (446 aa).

2 coiled-coil regions span residues 23 to 116 and 219 to 400; these read LEEL…RKID and ERKK…NVSR. Disordered regions lie at residues 247–277 and 394–430; these read NNTPMLFHNKPEDNQKQKEEQRKKQKLAVEA and VENNVSRDPSRLYKPTKGWEERTKKIGPTGSGPLLHI. A compositionally biased stretch (basic and acidic residues) spans 255 to 268; it reads NKPEDNQKQKEEQR.

Its subcellular location is the cytoplasm. The protein resides in the cytoskeleton. It localises to the microtubule organizing center. The protein localises to the centrosome. It is found in the centriolar satellite. The sequence is that of Coiled-coil domain-containing protein 112 (CCDC112) from Macaca fascicularis (Crab-eating macaque).